A 314-amino-acid polypeptide reads, in one-letter code: Mitochondrial translation factor 2 (314 aa).

The tract at residues 111–136 is disordered; sequence ENSSNIYDPSSPPDSPRKQQTHLGTI.

In terms of assembly, component of the MRH5C complex, composed of mrh5, ppr4, mtf2, and sls1. Proteins mtf2 and sls1 form a subcomplex that serves as a scaffold to bring mrh5 and ppr4 together. The MRH5C complex associates with the small subunit of the mitochondrial ribosome.

Translation activation factor that as part of the MRH5C complex specifically recruits cox1 mRNA to the mitochondrial ribosome for translation initiation. This is Mitochondrial translation factor 2 from Schizosaccharomyces pombe (strain 972 / ATCC 24843) (Fission yeast).